A 327-amino-acid polypeptide reads, in one-letter code: uncharacterized protein (327 aa).

The 68-residue stretch at 12–79 (KRIDEFLAKE…LKKELDLEIE (68 aa)) folds into the S4 RNA-binding domain. D136 is a catalytic residue.

Belongs to the pseudouridine synthase RluA family.

It catalyses the reaction a uridine in RNA = a pseudouridine in RNA. This is an uncharacterized protein from Helicobacter pylori (strain J99 / ATCC 700824) (Campylobacter pylori J99).